Consider the following 190-residue polypeptide: Cancer-related nucleoside-triphosphatase homolog (190 aa).

Residues 9-16 and 109-116 each bind ATP; these read GPPGVGKT and VCIIDEIG. Lysine 165 is subject to N6-acetyllysine.

It belongs to the THEP1 NTPase family. In terms of assembly, monomer.

The catalysed reaction is a ribonucleoside 5'-triphosphate + H2O = a ribonucleoside 5'-diphosphate + phosphate + H(+). The enzyme catalyses 5-methyl-UTP + H2O = 5-methyl-UDP + phosphate + H(+). It carries out the reaction CTP + H2O = CDP + phosphate + H(+). It catalyses the reaction ATP + H2O = ADP + phosphate + H(+). The catalysed reaction is GTP + H2O = GDP + phosphate + H(+). Has nucleotide phosphatase activity towards ATP, GTP, CTP, TTP and UTP. Hydrolyzes nucleoside diphosphates with lower efficiency. This Mus musculus (Mouse) protein is Cancer-related nucleoside-triphosphatase homolog.